Here is a 248-residue protein sequence, read N- to C-terminus: 2-C-methyl-D-erythritol 4-phosphate cytidylyltransferase (248 aa).

This sequence belongs to the IspD/TarI cytidylyltransferase family. IspD subfamily.

The catalysed reaction is 2-C-methyl-D-erythritol 4-phosphate + CTP + H(+) = 4-CDP-2-C-methyl-D-erythritol + diphosphate. It functions in the pathway isoprenoid biosynthesis; isopentenyl diphosphate biosynthesis via DXP pathway; isopentenyl diphosphate from 1-deoxy-D-xylulose 5-phosphate: step 2/6. Functionally, catalyzes the formation of 4-diphosphocytidyl-2-C-methyl-D-erythritol from CTP and 2-C-methyl-D-erythritol 4-phosphate (MEP). This Corynebacterium efficiens (strain DSM 44549 / YS-314 / AJ 12310 / JCM 11189 / NBRC 100395) protein is 2-C-methyl-D-erythritol 4-phosphate cytidylyltransferase.